Consider the following 397-residue polypeptide: 3-ketoacyl-CoA thiolase, mitochondrial (397 aa).

The transit peptide at 1 to 16 directs the protein to the mitochondrion; not cleaved; it reads MALLRGVFVVAAKRTP. Lysine 25 is modified (N6-acetyllysine; alternate). Lysine 25 carries the N6-succinyllysine; alternate modification. N6-succinyllysine is present on lysine 45. Cysteine 92 serves as the catalytic Acyl-thioester intermediate. Residue threonine 119 is modified to Phosphothreonine. Phosphoserine is present on serine 121. The residue at position 127 (tyrosine 127) is a Phosphotyrosine. Threonine 136 carries the phosphothreonine modification. Lysine 137 carries the N6-acetyllysine; alternate modification. N6-succinyllysine; alternate is present on lysine 137. Serine 140 is modified (phosphoserine). N6-acetyllysine; alternate is present on residues lysine 143, lysine 171, lysine 191, and lysine 209. N6-succinyllysine; alternate is present on residues lysine 143, lysine 171, lysine 191, and lysine 209. N6-succinyllysine is present on residues lysine 211, lysine 212, and lysine 214. CoA is bound by residues arginine 224 and threonine 227. Lysine 234 carries the post-translational modification N6-acetyllysine; alternate. At lysine 234 the chain carries N6-succinyllysine; alternate. Lysine 240 carries the post-translational modification N6-succinyllysine. Lysine 241 carries the post-translational modification N6-acetyllysine. Serine 251 contributes to the CoA binding site. N6-acetyllysine occurs at positions 269 and 270. Lysine 305 bears the N6-acetyllysine; alternate mark. At lysine 305 the chain carries N6-succinyllysine; alternate. Position 310 is a phosphoserine (serine 310). Residue lysine 312 is modified to N6-acetyllysine; alternate. An N6-succinyllysine; alternate modification is found at lysine 312. Serine 333 carries the post-translational modification Phosphoserine. N6-acetyllysine is present on residues lysine 340 and lysine 375. Catalysis depends on cysteine 382, which acts as the Proton donor/acceptor.

Belongs to the thiolase-like superfamily. Thiolase family. As to quaternary structure, homotetramer. Interacts with BNIP3.

Its subcellular location is the mitochondrion. The enzyme catalyses an acyl-CoA + acetyl-CoA = a 3-oxoacyl-CoA + CoA. It catalyses the reaction 2 acetyl-CoA = acetoacetyl-CoA + CoA. The catalysed reaction is acetyl-CoA + H2O = acetate + CoA + H(+). It carries out the reaction propanoyl-CoA + H2O = propanoate + CoA + H(+). The enzyme catalyses butanoyl-CoA + H2O = butanoate + CoA + H(+). It catalyses the reaction hexanoyl-CoA + H2O = hexanoate + CoA + H(+). The catalysed reaction is octanoyl-CoA + H2O = octanoate + CoA + H(+). It carries out the reaction decanoyl-CoA + H2O = decanoate + CoA + H(+). The enzyme catalyses dodecanoyl-CoA + H2O = dodecanoate + CoA + H(+). It catalyses the reaction tetradecanoyl-CoA + H2O = tetradecanoate + CoA + H(+). The catalysed reaction is hexadecanoyl-CoA + H2O = hexadecanoate + CoA + H(+). Its pathway is lipid metabolism; fatty acid beta-oxidation. In the production of energy from fats, this is one of the enzymes that catalyzes the last step of the mitochondrial beta-oxidation pathway, an aerobic process breaking down fatty acids into acetyl-CoA. Using free coenzyme A/CoA, catalyzes the thiolytic cleavage of medium- to long-chain unbranched 3-oxoacyl-CoAs into acetyl-CoA and a fatty acyl-CoA shortened by two carbon atoms. Also catalyzes the condensation of two acetyl-CoA molecules into acetoacetyl-CoA and could be involved in the production of ketone bodies. Also displays hydrolase activity on various fatty acyl-CoAs. Thereby, could be responsible for the production of acetate in a side reaction to beta-oxidation. Abolishes BNIP3-mediated apoptosis and mitochondrial damage. The chain is 3-ketoacyl-CoA thiolase, mitochondrial (ACAA2) from Homo sapiens (Human).